Consider the following 311-residue polypeptide: 4-hydroxy-tetrahydrodipicolinate synthase (311 aa).

Thr-49 contacts pyruvate. Tyr-138 (proton donor/acceptor) is an active-site residue. Lys-166 serves as the catalytic Schiff-base intermediate with substrate. Val-207 is a binding site for pyruvate.

Belongs to the DapA family. As to quaternary structure, homotetramer; dimer of dimers.

The protein resides in the cytoplasm. The catalysed reaction is L-aspartate 4-semialdehyde + pyruvate = (2S,4S)-4-hydroxy-2,3,4,5-tetrahydrodipicolinate + H2O + H(+). It functions in the pathway amino-acid biosynthesis; L-lysine biosynthesis via DAP pathway; (S)-tetrahydrodipicolinate from L-aspartate: step 3/4. Catalyzes the condensation of (S)-aspartate-beta-semialdehyde [(S)-ASA] and pyruvate to 4-hydroxy-tetrahydrodipicolinate (HTPA). This chain is 4-hydroxy-tetrahydrodipicolinate synthase, found in Lactobacillus helveticus (strain DPC 4571).